The primary structure comprises 44 residues: Photosystem I reaction center subunit IX (44 aa).

Residues 9–29 (FIRSAPVVAAVWLSLTAGIII) form a helical membrane-spanning segment.

It belongs to the PsaJ family.

Its subcellular location is the cellular thylakoid membrane. Functionally, may help in the organization of the PsaE and PsaF subunits. This is Photosystem I reaction center subunit IX from Prochlorococcus marinus subsp. pastoris (strain CCMP1986 / NIES-2087 / MED4).